Reading from the N-terminus, the 859-residue chain is Protein EFR3 homolog (859 aa).

Disordered stretches follow at residues 638–657 and 697–724; these read DDPL…TPRT and RDGN…PDGY. A compositionally biased stretch (basic and acidic residues) spans 704–722; that stretch reads WQREDGQNFDSTDGRESPD.

Belongs to the EFR3 family.

This Caenorhabditis briggsae protein is Protein EFR3 homolog.